We begin with the raw amino-acid sequence, 482 residues long: Pre-glycoprotein polyprotein GP complex (482 aa).

The N-myristoyl glycine; by host moiety is linked to residue G2. The Extracellular segment spans residues 2-17 (GQFISFMQEIPIFLQE). A helical membrane pass occupies residues 18 to 32 (ALNIALVAVSLICIV). Residue K33 is a topological domain, cytoplasmic. A helical transmembrane segment spans residues 34–53 (GLVNLYRCGLFQLMVFLVLA). Extracellular segments lie at residues 54 to 58 (GRSCS) and 59 to 421 (EETF…TLVD). C57 is a binding site for Zn(2+). N83 and N95 each carry an N-linked (GlcNAc...) asparagine; by host glycan. 5 cysteine pairs are disulfide-bonded: C92/C224, C134/C162, C205/C211, C269/C282, and C353/C374. N164 and N176 each carry an N-linked (GlcNAc...) asparagine; by host glycan. 4 N-linked (GlcNAc...) asparagine; by host glycosylation sites follow: N354, N362, N379, and N384. A helical membrane pass occupies residues 422–442 (ICFWSTEFFISTLFLHLIGFP). Topologically, residues 443–482 (THEHIRGEGCPLPHRLNSMGGCRCGKYLPLKKPTIWHRRH) are cytoplasmic. Zn(2+) is bound by residues H444, H446, C452, H456, C464, C466, and H482.

Belongs to the arenaviridae GPC protein family. Homotetramer; disulfide-linked. As to quaternary structure, homotetramer. GP2 homotetramers bind through ionic interactions with GP1 homotetramers to form the GP complex together with the stable signal peptide. The GP-C polyprotein interacts with the host protease MBTPS1/SKI-1 resulting in the polyprotein processing. Post-translationally, specific enzymatic cleavages in vivo yield mature proteins. GP-C polyprotein is cleaved in the endoplasmic reticulum by the host protease MBTPS1. Only cleaved glycoprotein is incorporated into virions. In terms of processing, the SSP remains stably associated with the GP complex following cleavage by signal peptidase and plays crucial roles in the trafficking of GP through the secretory pathway. Myristoylation is necessary for GP2-mediated fusion activity.

It localises to the virion membrane. The protein localises to the host endoplasmic reticulum membrane. The protein resides in the host Golgi apparatus membrane. It is found in the host cell membrane. Functionally, class I viral fusion protein that directs fusion of viral and host endosomal membranes, leading to delivery of the nucleocapsid into the cytoplasm. Membrane fusion is mediated by irreversible conformational changes induced upon acidification in the endosome. Stable signal peptide (SSP): cleaved and functions as a signal peptide. In addition, it is also retained as the third component of the GP complex. The SSP is required for efficient glycoprotein expression, post-translational maturation cleavage of GP1 and GP2, glycoprotein transport to the cell surface plasma membrane, formation of infectious virus particles, and acid pH-dependent glycoprotein-mediated cell fusion. In terms of biological role, interacts with the host receptor. The sequence is that of Pre-glycoprotein polyprotein GP complex from Artibeus (neotropical fruit bats).